A 238-amino-acid polypeptide reads, in one-letter code: Immunoglobulin superfamily member 6 (238 aa).

The N-terminal stretch at Met1–Ala27 is a signal peptide. Residues Cys28 to Leu153 are Extracellular-facing. Residues Val30–Gly134 enclose the Ig-like C2-type domain. An intrachain disulfide couples Cys51 to Cys118. Residues Leu154–Val174 traverse the membrane as a helical segment. The Cytoplasmic portion of the chain corresponds to Leu175–Pro238. The span at Glu215–Lys230 shows a compositional bias: basic and acidic residues. The interval Glu215–Pro238 is disordered.

Its subcellular location is the membrane. This chain is Immunoglobulin superfamily member 6 (Igsf6), found in Rattus norvegicus (Rat).